The primary structure comprises 671 residues: MMFTRAQVRKQKTSNSSSQRPRSSGGSTRHETRYKQSSTSSSGAGSGLSGASGASGARRDQYRDRDHYGKHSFELPRQHSKEEAYHRDRESSAGGVDRGERSGIGGNGGGVTGGGVYVDRRTRPRSITNRRGAIKHQKTHDINGHRFVAKFFRQPTFCAFCNLFLWGFGKQGYQCIICQTVVHKKCHDKLLGKCSGSVFTSASTILLRERFKIDMPHRFKPHTFMSPTFCDHCGSLMGGFFIQGLKCEECDVNCHKKCERLTANLCGVNQKLIVEALNHVKRGAREARDSPSTPPSLNPAYKIEASEEHDETSYTYSQFQKSGRFTAPATVIPRFKNYSVDDFHFLAVLGKGSFGKVLLAELRDTTYYYAIKCLKKDVVLEDDDVDSTLIERKVLALGTKHPYLCHLFCTFQTESHLFFVMEYLNGGDLMFHIQESGRFSEERARFYGAEIISGLKFLHKKGIIYRDLKLDNVLLDYEGHVRIADFGMCKLQIYLDKTADSFCGTPDYMAPEIIKGEKYNQNVDWWSFGVLLYEMLIGQSPFSGCDEDELFWSICNEIPWFPVYISAEATGILKGLLEKDYTKRIGSQYSPAGDIADHIFFRPIDWGLLEKRQIEPPFKPQVKHPLDTQYFDRVFTRERVRLTPIDKEILASMDQKQFHGFTYTNPHITLD.

Residues 1–136 (MMFTRAQVRK…ITNRRGAIKH (136 aa)) are disordered. Low complexity predominate over residues 14-27 (SNSSSQRPRSSGGS). The segment covering 57-101 (ARRDQYRDRDHYGKHSFELPRQHSKEEAYHRDRESSAGGVDRGER) has biased composition (basic and acidic residues). Residues 102 to 116 (SGIGGNGGGVTGGGV) are compositionally biased toward gly residues. 2 Phorbol-ester/DAG-type zinc fingers span residues 144-194 (GHRF…LGKC) and 216-266 (PHRF…ANLC). The Protein kinase domain maps to 343–601 (FHFLAVLGKG…AGDIADHIFF (259 aa)). ATP-binding positions include 349–357 (LGKGSFGKV) and Lys372. The active-site Proton acceptor is Asp467. An AGC-kinase C-terminal domain is found at 602 to 671 (RPIDWGLLEK…TYTNPHITLD (70 aa)).

It belongs to the protein kinase superfamily. AGC Ser/Thr protein kinase family. PKC subfamily.

It catalyses the reaction L-seryl-[protein] + ATP = O-phospho-L-seryl-[protein] + ADP + H(+). It carries out the reaction L-threonyl-[protein] + ATP = O-phospho-L-threonyl-[protein] + ADP + H(+). The protein is Putative protein kinase C delta type homolog of Drosophila melanogaster (Fruit fly).